We begin with the raw amino-acid sequence, 134 residues long: Arsenate reductase 1 (134 aa).

Residues cysteine 11, cysteine 83, and cysteine 90 each act as nucleophile in the active site. 2 disulfide bridges follow: cysteine 11–cysteine 83 and cysteine 83–cysteine 90.

This sequence belongs to the low molecular weight phosphotyrosine protein phosphatase family. Thioredoxin-coupled ArsC subfamily.

The protein localises to the cytoplasm. The catalysed reaction is arsenate + [thioredoxin]-dithiol + H(+) = arsenite + [thioredoxin]-disulfide + H2O. In terms of biological role, catalyzes the reduction of arsenate [As(V)] to arsenite [As(III)]. This chain is Arsenate reductase 1, found in Bacillus cereus (strain ATCC 10987 / NRS 248).